A 312-amino-acid chain; its full sequence is Dihydroorotate dehydrogenase B (NAD(+)), catalytic subunit (312 aa).

FMN-binding positions include Ser23 and 47–48; that span reads KA. Residues Lys47 and 71-75 each bind substrate; that span reads NAIGL. FMN is bound by residues Asn102 and Asn130. Residue Asn130 participates in substrate binding. Residue Cys133 is the Nucleophile of the active site. 2 residues coordinate FMN: Lys168 and Ile194. 195–196 lines the substrate pocket; that stretch reads NT. Residues Gly220, 246–247, and 268–269 each bind FMN; these read GG and GT.

This sequence belongs to the dihydroorotate dehydrogenase family. Type 1 subfamily. As to quaternary structure, heterotetramer of 2 PyrK and 2 PyrD type B subunits. It depends on FMN as a cofactor.

Its subcellular location is the cytoplasm. It catalyses the reaction (S)-dihydroorotate + NAD(+) = orotate + NADH + H(+). It participates in pyrimidine metabolism; UMP biosynthesis via de novo pathway; orotate from (S)-dihydroorotate (NAD(+) route): step 1/1. In terms of biological role, catalyzes the conversion of dihydroorotate to orotate with NAD(+) as electron acceptor. The protein is Dihydroorotate dehydrogenase B (NAD(+)), catalytic subunit (pyrDB) of Enterococcus faecalis (strain ATCC 47077 / OG1RF).